Here is a 95-residue protein sequence, read N- to C-terminus: Pancreatic polypeptide prohormone (95 aa).

Residues 1-29 (MAAARLCLSLLLLSTCVALLLQPLLGAQG) form the signal peptide. Tyr-65 is subject to Tyrosine amide. Positions 89–95 (ELSPLDL) are excised as a propeptide.

The protein belongs to the NPY family.

It localises to the secreted. Hormone secreted by pancreatic cells that acts as a regulator of pancreatic and gastrointestinal functions probably by signaling through the G protein-coupled receptor NPY4R2. The sequence is that of Pancreatic polypeptide prohormone from Homo sapiens (Human).